The sequence spans 406 residues: 4-hydroxy-3-methylbut-2-en-1-yl diphosphate synthase (flavodoxin) (406 aa).

The [4Fe-4S] cluster site is built by Cys-297, Cys-300, Cys-343, and Glu-350.

Belongs to the IspG family. In terms of assembly, homodimer. [4Fe-4S] cluster serves as cofactor.

The enzyme catalyses (2E)-4-hydroxy-3-methylbut-2-enyl diphosphate + oxidized [flavodoxin] + H2O + 2 H(+) = 2-C-methyl-D-erythritol 2,4-cyclic diphosphate + reduced [flavodoxin]. It functions in the pathway isoprenoid biosynthesis; isopentenyl diphosphate biosynthesis via DXP pathway; isopentenyl diphosphate from 1-deoxy-D-xylulose 5-phosphate: step 5/6. Its function is as follows. Converts 2C-methyl-D-erythritol 2,4-cyclodiphosphate (ME-2,4cPP) into 1-hydroxy-2-methyl-2-(E)-butenyl 4-diphosphate. The chain is 4-hydroxy-3-methylbut-2-en-1-yl diphosphate synthase (flavodoxin) from Thermus thermophilus (strain ATCC BAA-163 / DSM 7039 / HB27).